Reading from the N-terminus, the 298-residue chain is Tyrosine recombinase XerC (298 aa).

The Core-binding (CB) domain maps to 2–88 (TDLHTDVERY…ALRSFFDWLV (87 aa)). Residues 109-288 (HLPKNIDVDD…DFQHLASVYD (180 aa)) enclose the Tyr recombinase domain. Catalysis depends on residues Arg148, Lys172, His240, Arg243, and His266. Tyr275 (O-(3'-phospho-DNA)-tyrosine intermediate) is an active-site residue.

Belongs to the 'phage' integrase family. XerC subfamily. Forms a cyclic heterotetrameric complex composed of two molecules of XerC and two molecules of XerD, in which XerC interacts with XerD via its C-terminal region, XerD interacts with XerC via its C-terminal region and so on.

It is found in the cytoplasm. With respect to regulation, ftsK may regulate the catalytic switch between XerC and XerD in the heterotetrameric complex during the two steps of the recombination process. Functionally, site-specific tyrosine recombinase, which acts by catalyzing the cutting and rejoining of the recombining DNA molecules. Binds cooperatively to specific DNA consensus sequences that are separated from XerD binding sites by a short central region, forming the heterotetrameric XerC-XerD complex that recombines DNA substrates. The complex is essential to convert dimers of the bacterial chromosome into monomers to permit their segregation at cell division. It also contributes to the segregational stability of plasmids. In the complex XerC specifically exchanges the top DNA strands. This is Tyrosine recombinase XerC from Escherichia coli O127:H6 (strain E2348/69 / EPEC).